Consider the following 444-residue polypeptide: E1B 55 kDa protein (444 aa).

A disordered region spans residues 1–35 (MEQNADMEPDRQVNQRPPRFRARGAGVRGRGRVRR). 2 positions are modified to phosphoserine: serine 438 and serine 439.

The protein belongs to the adenoviridae E1B 55 kDa protein family. Interacts with host PML-4 and PML-5; this interaction promotes efficient subnuclear targeting of E1B-55K to PML nuclear bodies. Interacts with E4-ORF3 protein. Interacts with E4-ORF6 protein.

The protein localises to the host nucleus. Its subcellular location is the host cytoplasm. Plays a major role to prevent cellular inhibition of viral genome replication. Assembles an SCF-like E3 ubiquitin ligase complex based on the cellular proteins ELOB, ELOC, CUL5 and RBX1, in cooperation with viral E4orf6. This viral RING-type ligase ubiquitinates cellular substrates and targets them to proteasomal degradation: TP53/p53, LIG4, MRE11-RAD50-NBS1 (MRN) complex, ITGA3, DAXX and BLM. E1B-55K probably acts as the substrate-specific adapter of the SCF-like E3 ubiquitin ligase complex. Degradation of host TP53/p53 activity is essential for preventing E1A-induced TP53 accumulation that would otherwise lead to cell apoptosis and growth arrest. E1B-55K also inactivates TP53 transcription-factor activity by binding its transactivation domain. E1B-55K also functions as a SUMO1 E3 ligase for TP53 which causes the latter to be sequestered in promyelocytic leukemia (PML) nuclear bodies thereby contributing to maximal inhibition of TP53 function. The polypeptide is E1B 55 kDa protein (Canis lupus familiaris (Dog)).